The sequence spans 242 residues: Anamorsin homolog (242 aa).

The interval 1 to 140 (MMNFADTLVI…NVTAENPDFL (140 aa)) is N-terminal SAM-like domain. The interval 140–159 (LSNEDDNDEHSSDGEAHENA) is disordered. Positions 141–162 (SNEDDNDEHSSDGEAHENAEDN) are linker. A compositionally biased stretch (basic and acidic residues) spans 148-159 (EHSSDGEAHENA). Residues cysteine 205, cysteine 208, cysteine 216, and cysteine 219 each coordinate [4Fe-4S] cluster. Short sequence motifs (cx2C motif) lie at residues 205 to 208 (CGNC) and 216 to 219 (CASC). Residues 205 to 219 (CGNCYLGDAFRCASC) are fe-S binding site B.

It belongs to the anamorsin family. In terms of assembly, monomer. [4Fe-4S] cluster serves as cofactor.

The protein localises to the cytoplasm. It localises to the mitochondrion intermembrane space. Component of the cytosolic iron-sulfur (Fe-S) protein assembly (CIA) machinery. Required for the maturation of extramitochondrial Fe-S proteins. Part of an electron transfer chain functioning in an early step of cytosolic Fe-S biogenesis, facilitating the de novo assembly of a [4Fe-4S] cluster on the cytosolic Fe-S scaffold complex. Electrons are transferred from NADPH via a FAD- and FMN-containing diflavin oxidoreductase. Together with the diflavin oxidoreductase, also required for the assembly of the diferric tyrosyl radical cofactor of ribonucleotide reductase (RNR), probably by providing electrons for reduction during radical cofactor maturation in the catalytic small subunit. This Plasmodium vivax (strain Salvador I) protein is Anamorsin homolog.